Consider the following 198-residue polypeptide: Cell division protein SepF (198 aa).

Positions 170–198 (EVPQPPARPARPASTNPPAWGNETNRMAQ) are disordered. Low complexity predominate over residues 179–188 (ARPASTNPPA).

The protein belongs to the SepF family. As to quaternary structure, homodimer. Interacts with FtsZ.

The protein resides in the cytoplasm. In terms of biological role, cell division protein that is part of the divisome complex and is recruited early to the Z-ring. Probably stimulates Z-ring formation, perhaps through the cross-linking of FtsZ protofilaments. Its function overlaps with FtsA. This is Cell division protein SepF from Trichormus variabilis (strain ATCC 29413 / PCC 7937) (Anabaena variabilis).